Consider the following 294-residue polypeptide: 33 kDa chaperonin (294 aa).

2 disulfides stabilise this stretch: cysteine 238–cysteine 240 and cysteine 271–cysteine 274.

The protein belongs to the HSP33 family. In terms of processing, under oxidizing conditions two disulfide bonds are formed involving the reactive cysteines. Under reducing conditions zinc is bound to the reactive cysteines and the protein is inactive.

It localises to the cytoplasm. Functionally, redox regulated molecular chaperone. Protects both thermally unfolding and oxidatively damaged proteins from irreversible aggregation. Plays an important role in the bacterial defense system toward oxidative stress. The protein is 33 kDa chaperonin of Clostridium tetani (strain Massachusetts / E88).